A 263-amino-acid polypeptide reads, in one-letter code: Triosephosphate isomerase (263 aa).

Residue 10–12 participates in substrate binding; sequence NWK. The active-site Electrophile is the H104. The Proton acceptor role is filled by E176. Substrate-binding positions include G182, S221, and 242 to 243; that span reads GG.

This sequence belongs to the triosephosphate isomerase family. Homodimer.

The protein localises to the cytoplasm. It carries out the reaction D-glyceraldehyde 3-phosphate = dihydroxyacetone phosphate. The protein operates within carbohydrate biosynthesis; gluconeogenesis. It functions in the pathway carbohydrate degradation; glycolysis; D-glyceraldehyde 3-phosphate from glycerone phosphate: step 1/1. Functionally, involved in the gluconeogenesis. Catalyzes stereospecifically the conversion of dihydroxyacetone phosphate (DHAP) to D-glyceraldehyde-3-phosphate (G3P). The polypeptide is Triosephosphate isomerase (Haemophilus influenzae (strain 86-028NP)).